The chain runs to 312 residues: Ribosomal RNA small subunit methyltransferase H (312 aa).

Residues 38–40, D58, F84, D104, and Q111 contribute to the S-adenosyl-L-methionine site; that span reads GGH.

The protein belongs to the methyltransferase superfamily. RsmH family.

Its subcellular location is the cytoplasm. The catalysed reaction is cytidine(1402) in 16S rRNA + S-adenosyl-L-methionine = N(4)-methylcytidine(1402) in 16S rRNA + S-adenosyl-L-homocysteine + H(+). Its function is as follows. Specifically methylates the N4 position of cytidine in position 1402 (C1402) of 16S rRNA. This chain is Ribosomal RNA small subunit methyltransferase H, found in Alcanivorax borkumensis (strain ATCC 700651 / DSM 11573 / NCIMB 13689 / SK2).